We begin with the raw amino-acid sequence, 182 residues long: T-cell surface glycoprotein CD3 gamma chain (182 aa).

Positions 1–22 (MEQGKHLAGLILAITLLQGTMA) are cleaved as a signal peptide. The Ig-like domain maps to 23-98 (QLKEGKHSVL…GSKENSKRLQ (76 aa)). Topologically, residues 23 to 116 (QLKEGKHSVL…CIELNSATVS (94 aa)) are extracellular. C46 and C87 are disulfide-bonded. A glycan (N-linked (GlcNAc...) asparagine) is linked at N66. The chain crosses the membrane as a helical span at residues 117 to 137 (GFIFTEIISLFFLAVGVYFIA). The Cytoplasmic segment spans residues 138–182 (GQDGVRQSRASDKQTLLSNDQLYQPLKDREDDQYSHLQGNNSRKN). At S145 the chain carries Phosphoserine. S148 bears the Phosphoserine; by PKC mark. In terms of domain architecture, ITAM spans 149–177 (DKQTLLSNDQLYQPLKDREDDQYSHLQGN). Residues 153–154 (LL) carry the Di-leucine motif motif.

The TCR-CD3 complex is composed of a CD3D/CD3E and a CD3G/CD3E heterodimers that preferentially associate with TCRalpha and TCRbeta, respectively, to form TCRalpha/CD3E/CD3G and TCRbeta/CD3G/CD3E trimers. In turn, the hexamer interacts with CD3Z homodimer to form the TCR-CD3 complex. Alternatively, TCRalpha and TCRbeta can be replaced by TCRgamma and TCRdelta. In terms of processing, phosphorylated on Tyr residues after T-cell receptor triggering by LCK in association with CD4/CD8. Phosphorylated also by PKC; leading to the TCR complex down-regulation. Post-translationally, phosphorylated on Tyr residues after T-cell receptor triggering by LCK in association with CD4/CD8.

It localises to the cell membrane. Part of the TCR-CD3 complex present on T-lymphocyte cell surface that plays an essential role in adaptive immune response. When antigen presenting cells (APCs) activate T-cell receptor (TCR), TCR-mediated signals are transmitted across the cell membrane by the CD3 chains CD3D, CD3E, CD3G and CD3Z. All CD3 chains contain immunoreceptor tyrosine-based activation motifs (ITAMs) in their cytoplasmic domain. Upon TCR engagement, these motifs become phosphorylated by Src family protein tyrosine kinases LCK and FYN, resulting in the activation of downstream signaling pathways. In addition to this role of signal transduction in T-cell activation, CD3G plays an essential role in the dynamic regulation of TCR expression at the cell surface. Indeed, constitutive TCR cycling is dependent on the di-leucine-based (diL) receptor-sorting motif present in CD3G. This chain is T-cell surface glycoprotein CD3 gamma chain (CD3G), found in Sus scrofa (Pig).